The primary structure comprises 502 residues: 4,4'-diaponeurosporene oxygenase (502 aa).

8 to 20 (IIGGGLGGISAAI) serves as a coordination point for FAD.

The protein belongs to the carotenoid/retinoid oxidoreductase family. CrtP subfamily. The cofactor is FAD.

It carries out the reaction all-trans-4,4'-diaponeurosporene + 2 AH2 + 2 O2 = 4,4'-diaponeurosporenal + 2 A + 3 H2O. The protein operates within carotenoid biosynthesis; staphyloxanthin biosynthesis; staphyloxanthin from farnesyl diphosphate: step 3/5. Involved in the biosynthesis of the yellow-orange carotenoid staphyloxanthin, which plays a role in the virulence via its protective function against oxidative stress. Catalyzes the oxidation of the terminal methyl side group of 4,4'-diaponeurosporene to form 4,4'-diaponeurosporen-4-al. This chain is 4,4'-diaponeurosporene oxygenase, found in Staphylococcus haemolyticus (strain JCSC1435).